The chain runs to 256 residues: 6-carboxyhexanoate--CoA ligase (256 aa).

Belongs to the BioW family. In terms of assembly, homodimer. The cofactor is Mg(2+).

It carries out the reaction heptanedioate + ATP + CoA = 6-carboxyhexanoyl-CoA + AMP + diphosphate. Its pathway is metabolic intermediate metabolism; pimeloyl-CoA biosynthesis; pimeloyl-CoA from pimelate: step 1/1. In terms of biological role, catalyzes the transformation of pimelate into pimeloyl-CoA with concomitant hydrolysis of ATP to AMP. The chain is 6-carboxyhexanoate--CoA ligase from Methanobrevibacter ruminantium (strain ATCC 35063 / DSM 1093 / JCM 13430 / OCM 146 / M1) (Methanobacterium ruminantium).